The primary structure comprises 176 residues: Dual-action ribosomal maturation protein DarP (176 aa).

It belongs to the DarP family.

The protein resides in the cytoplasm. Functionally, member of a network of 50S ribosomal subunit biogenesis factors which assembles along the 30S-50S interface, preventing incorrect 23S rRNA structures from forming. Promotes peptidyl transferase center (PTC) maturation. The chain is Dual-action ribosomal maturation protein DarP from Actinobacillus pleuropneumoniae serotype 5b (strain L20).